The following is a 437-amino-acid chain: Adenylosuccinate synthetase (437 aa).

GTP is bound by residues 12–18 (GDEGKGK) and 40–42 (GHT). Asp-13 acts as the Proton acceptor in catalysis. Mg(2+)-binding residues include Asp-13 and Gly-40. IMP contacts are provided by residues 13–16 (DEGK), 38–41 (NAGH), Thr-128, Arg-142, Gln-223, Thr-238, and Arg-302. Residue His-41 is the Proton donor of the active site. 298–304 (TTTGRKR) is a substrate binding site. GTP contacts are provided by residues Arg-304, 330–332 (KLD), and 412–414 (SLG).

Belongs to the adenylosuccinate synthetase family. As to quaternary structure, homodimer. Mg(2+) is required as a cofactor.

It is found in the cytoplasm. The enzyme catalyses IMP + L-aspartate + GTP = N(6)-(1,2-dicarboxyethyl)-AMP + GDP + phosphate + 2 H(+). It participates in purine metabolism; AMP biosynthesis via de novo pathway; AMP from IMP: step 1/2. In terms of biological role, plays an important role in the de novo pathway of purine nucleotide biosynthesis. Catalyzes the first committed step in the biosynthesis of AMP from IMP. This is Adenylosuccinate synthetase from Trichodesmium erythraeum (strain IMS101).